A 446-amino-acid polypeptide reads, in one-letter code: Iroquois homeobox protein 5a (446 aa).

Positions 117-173 (NATRDATATLKAWLNEHRKNPYPTKGEKIMLAIITKMTLTQVSTWFANARRRLKKEN) form a DNA-binding region, homeobox. Positions 175 to 312 (MTWTPRNRSE…IHSPPSAPKP (138 aa)) are disordered. Acidic residues predominate over residues 184–201 (EDEEEDENIDLEKNDDDE). Basic and acidic residues-rich tracts occupy residues 202-220 (PNKP…DHKL) and 227-258 (PCDR…RTDL). Polar residues-rich tracts occupy residues 264 to 274 (KPTTSSPSVLQ) and 293 to 303 (STGNSNVTSVI).

The protein belongs to the TALE/IRO homeobox family.

The protein localises to the nucleus. Transcription factor. Binds to consensus iroquois binding site (IBS) motifs 5'-ACANNTGT-3' or 5'-ACANNNTGT-3' in regulatory elements of target genes. Required, together with irx7, for hyoid joint formation; they act cell autonomously to repress expression of cartilage matrix genes, such as collagen col2a1a, within immature chondrocytes of the joint interzone. May compete with or modify Sox9a activity, thereby reducing Sox9a-mediated activation of col2a1a. Probably acts in the developing hyoid joint downstream of Bmp signaling. In concert with irx6a, plays a role in visual performance. In Danio rerio (Zebrafish), this protein is Iroquois homeobox protein 5a (irx5a).